Reading from the N-terminus, the 108-residue chain is UPF0145 protein ACIAD2946 (108 aa).

The protein belongs to the UPF0145 family.

The protein is UPF0145 protein ACIAD2946 of Acinetobacter baylyi (strain ATCC 33305 / BD413 / ADP1).